The following is a 546-amino-acid chain: Histidine--tRNA ligase, mitochondrial (546 aa).

The transit peptide at 1–20 (MLSRSLNKVVTSIKSSSIIR) directs the protein to the mitochondrion. L-histidine-binding positions include 129–131 (DLT), Arg-156, Gln-172, Asp-176, Arg-326, and 330–331 (YY).

Belongs to the class-II aminoacyl-tRNA synthetase family.

The protein localises to the cytoplasm. Its subcellular location is the mitochondrion. The catalysed reaction is tRNA(His) + L-histidine + ATP = L-histidyl-tRNA(His) + AMP + diphosphate + H(+). In terms of biological role, catalyzes the aminoacylation of histidyl-tRNA in both the cytoplasm and the mitochondrion. This chain is Histidine--tRNA ligase, mitochondrial (HTS1), found in Saccharomyces cerevisiae (strain ATCC 204508 / S288c) (Baker's yeast).